Reading from the N-terminus, the 201-residue chain is Urease accessory protein UreG (201 aa).

11 to 18 (GPVGSGKT) is a GTP binding site.

Belongs to the SIMIBI class G3E GTPase family. UreG subfamily. Homodimer. UreD, UreF and UreG form a complex that acts as a GTP-hydrolysis-dependent molecular chaperone, activating the urease apoprotein by helping to assemble the nickel containing metallocenter of UreC. The UreE protein probably delivers the nickel.

The protein resides in the cytoplasm. Facilitates the functional incorporation of the urease nickel metallocenter. This process requires GTP hydrolysis, probably effectuated by UreG. This Synechococcus sp. (strain CC9902) protein is Urease accessory protein UreG.